A 931-amino-acid chain; its full sequence is MRVKDTLNLGKTKFPMRGNLPKREAEWEKNWEDQKFYERRLKLNEGHERFDLHDGPPFANGNIHMGHALNKITKDIIVRSKNMEGYYAPYVPGWDTHGLPIEQQLTKQGVDRKTMDRAAYRELCRKFAMEQVEKQRTDFKRLGVMGDWDHPYITLLPEFEAAEIRVFGKMYENGYIYQGKKPVYWSWSSESTLAEAEVEYHDVESPSIYISFPVKDGKGKLSEENTYFLIWTTTPWTIPSNQGIAVNPKFDYSVVEVGDRRYVVGTDRLSAVAEILGWDSYKTVQHLKGTDMEYMVAKHPYIEGRDSLLMEAVYVTDDDGTGLVHTASGFGEDDYNTAMRYGFDVLSPMDNKGCFTEEIPDPDLVGKFYTDTNEIVKDKLSAAGNLLHYSTFVHSAAHDWRTKKPVVYRATTQWFASISKFRDQILDQIEKTTFYPAWGKTRLYNMIKDRGDWVISRQRAWGVPLPIFYAEDGTAIVTHETIEHVADLFAKEGSNAWFTHPVEELLPEGFTSEHSPNGKFTKETDILDVWFDSGSSWSGVQALGRAVHYPTSMYLEGSDQYRGWFNSSLITSVATNGVAPYKSVLSQGFTLDGQGRKMSKSLGNTIAPNDVIKQMGAEIIRLWVASVDASGDVGVSMDILRQVSEGYRKIRNTFRYMLANTADFDPEKDRVAYKDLRKIDQYLEVKLNDLVAESIVNYDKYDFADVYKLVFKFITNDLSAFYLDFAKDVLYIEGKDSHARRSMQTVIYDAAVKLAKILAPILPHTMGEVWGYLKEKEEDVYLSNFPEIEDYADADDLKESWGEFMKLRDDVLKALEEARDQKLIGKSFEASVTVYPGEAAKAALDKLAGEDFREILIVSNLVMGQGEVPAEAKQFDQASVLVRRAEGEVCPRCRMYRTDLGADSRLPQLCGRCASIVAGDHPEILEEGLED.

The short motif at 57 to 67 is the 'HIGH' region element; it reads PFANGNIHMGH. An L-isoleucyl-5'-AMP-binding site is contributed by Glu556. Residues 597-601 carry the 'KMSKS' region motif; the sequence is KMSKS. Residue Lys600 participates in ATP binding. Residues Cys890, Cys893, Cys910, and Cys913 each contribute to the Zn(2+) site.

It belongs to the class-I aminoacyl-tRNA synthetase family. IleS type 1 subfamily. Monomer. Zn(2+) serves as cofactor.

The protein resides in the cytoplasm. The enzyme catalyses tRNA(Ile) + L-isoleucine + ATP = L-isoleucyl-tRNA(Ile) + AMP + diphosphate. Its function is as follows. Catalyzes the attachment of isoleucine to tRNA(Ile). As IleRS can inadvertently accommodate and process structurally similar amino acids such as valine, to avoid such errors it has two additional distinct tRNA(Ile)-dependent editing activities. One activity is designated as 'pretransfer' editing and involves the hydrolysis of activated Val-AMP. The other activity is designated 'posttransfer' editing and involves deacylation of mischarged Val-tRNA(Ile). The polypeptide is Isoleucine--tRNA ligase (Lactobacillus delbrueckii subsp. bulgaricus (strain ATCC BAA-365 / Lb-18)).